Reading from the N-terminus, the 1145-residue chain is DNA-directed RNA polymerase subunit beta (1145 aa).

Residues 1101-1112 (LPEERRVSSSKE) are compositionally biased toward basic and acidic residues. Residues 1101–1145 (LPEERRVSSSKEEIEEEEEVEDNSDEFDETFLEEAEDDFSLDDED) are disordered. The segment covering 1113-1145 (EIEEEEEVEDNSDEFDETFLEEAEDDFSLDDED) has biased composition (acidic residues).

Belongs to the RNA polymerase beta chain family. The RNAP catalytic core consists of 2 alpha, 1 beta, 1 beta' and 1 omega subunit. When a sigma factor is associated with the core the holoenzyme is formed, which can initiate transcription.

It carries out the reaction RNA(n) + a ribonucleoside 5'-triphosphate = RNA(n+1) + diphosphate. DNA-dependent RNA polymerase catalyzes the transcription of DNA into RNA using the four ribonucleoside triphosphates as substrates. This Desulforamulus reducens (strain ATCC BAA-1160 / DSM 100696 / MI-1) (Desulfotomaculum reducens) protein is DNA-directed RNA polymerase subunit beta.